A 229-amino-acid chain; its full sequence is Protein MC132 (229 aa).

As to quaternary structure, interacts with host RELA (via RHD domain), ELOB, ELOC and CUL5; these interactions induce the proteasomal degradation of host RELA.

The protein localises to the host cytoplasm. Functionally, inhibits host NF-kappa-B activation stimulated by IL-1 and multiple PRR viral detection pathways. Targets host NF-kappa-B component RELA/p65 for ubiquitin-dependent proteasomal degradation. This is Protein MC132 (MC132) from Homo sapiens (Human).